The chain runs to 309 residues: GTPase Era (309 aa).

One can recognise an Era-type G domain in the interval 16–186 (HAGFVAIVGK…REQILDALPE (171 aa)). The G1 stretch occupies residues 24–31 (GKPNVGKS). A GTP-binding site is contributed by 24 to 31 (GKPNVGKS). Residues 50–54 (QTTRR) are G2. The G3 stretch occupies residues 71–74 (DTPG). Residues 71-75 (DTPGL) and 133-136 (NKVD) contribute to the GTP site. The tract at residues 133-136 (NKVD) is G4. A G5 region spans residues 164–166 (LSA). The 78-residue stretch at 217-294 (LREELPYAVA…FLGLEVIVIP (78 aa)) folds into the KH type-2 domain.

This sequence belongs to the TRAFAC class TrmE-Era-EngA-EngB-Septin-like GTPase superfamily. Era GTPase family. As to quaternary structure, monomer.

Its subcellular location is the cytoplasm. It is found in the cell membrane. An essential GTPase that binds both GDP and GTP, with rapid nucleotide exchange. Plays a role in 16S rRNA processing and 30S ribosomal subunit biogenesis and possibly also in cell cycle regulation and energy metabolism. This is GTPase Era from Deinococcus geothermalis (strain DSM 11300 / CIP 105573 / AG-3a).